The chain runs to 418 residues: Gamma-glutamyl phosphate reductase (418 aa).

This sequence belongs to the gamma-glutamyl phosphate reductase family.

Its subcellular location is the cytoplasm. The enzyme catalyses L-glutamate 5-semialdehyde + phosphate + NADP(+) = L-glutamyl 5-phosphate + NADPH + H(+). It functions in the pathway amino-acid biosynthesis; L-proline biosynthesis; L-glutamate 5-semialdehyde from L-glutamate: step 2/2. Functionally, catalyzes the NADPH-dependent reduction of L-glutamate 5-phosphate into L-glutamate 5-semialdehyde and phosphate. The product spontaneously undergoes cyclization to form 1-pyrroline-5-carboxylate. The protein is Gamma-glutamyl phosphate reductase of Chlorobium chlorochromatii (strain CaD3).